The chain runs to 72 residues: MAHPSQLGFQDAASPVMEELLHFHDHALMIVFLISTLVLYIIVAMVSTKLTNKHILDSQEVEIVWTILPAVI.

At 1-14 (MAHPSQLGFQDAAS) the chain is on the mitochondrial intermembrane side. A helical membrane pass occupies residues 15 to 45 (PVMEELLHFHDHALMIVFLISTLVLYIIVAM). The Mitochondrial matrix segment spans residues 46–72 (VSTKLTNKHILDSQEVEIVWTILPAVI).

Belongs to the cytochrome c oxidase subunit 2 family. Component of the cytochrome c oxidase (complex IV, CIV), a multisubunit enzyme composed of 14 subunits. The complex is composed of a catalytic core of 3 subunits MT-CO1, MT-CO2 and MT-CO3, encoded in the mitochondrial DNA, and 11 supernumerary subunits COX4I, COX5A, COX5B, COX6A, COX6B, COX6C, COX7A, COX7B, COX7C, COX8 and NDUFA4, which are encoded in the nuclear genome. The complex exists as a monomer or a dimer and forms supercomplexes (SCs) in the inner mitochondrial membrane with NADH-ubiquinone oxidoreductase (complex I, CI) and ubiquinol-cytochrome c oxidoreductase (cytochrome b-c1 complex, complex III, CIII), resulting in different assemblies (supercomplex SCI(1)III(2)IV(1) and megacomplex MCI(2)III(2)IV(2)). Found in a complex with TMEM177, COA6, COX18, COX20, SCO1 and SCO2. Interacts with TMEM177 in a COX20-dependent manner. Interacts with COX20. Interacts with COX16. Cu cation serves as cofactor.

It is found in the mitochondrion inner membrane. It carries out the reaction 4 Fe(II)-[cytochrome c] + O2 + 8 H(+)(in) = 4 Fe(III)-[cytochrome c] + 2 H2O + 4 H(+)(out). Its function is as follows. Component of the cytochrome c oxidase, the last enzyme in the mitochondrial electron transport chain which drives oxidative phosphorylation. The respiratory chain contains 3 multisubunit complexes succinate dehydrogenase (complex II, CII), ubiquinol-cytochrome c oxidoreductase (cytochrome b-c1 complex, complex III, CIII) and cytochrome c oxidase (complex IV, CIV), that cooperate to transfer electrons derived from NADH and succinate to molecular oxygen, creating an electrochemical gradient over the inner membrane that drives transmembrane transport and the ATP synthase. Cytochrome c oxidase is the component of the respiratory chain that catalyzes the reduction of oxygen to water. Electrons originating from reduced cytochrome c in the intermembrane space (IMS) are transferred via the dinuclear copper A center (CU(A)) of subunit 2 and heme A of subunit 1 to the active site in subunit 1, a binuclear center (BNC) formed by heme A3 and copper B (CU(B)). The BNC reduces molecular oxygen to 2 water molecules using 4 electrons from cytochrome c in the IMS and 4 protons from the mitochondrial matrix. This is Cytochrome c oxidase subunit 2 (mt-co2) from Atractosteus spatula (Alligator gar).